Here is a 141-residue protein sequence, read N- to C-terminus: Large ribosomal subunit protein uL11 (141 aa).

Belongs to the universal ribosomal protein uL11 family. As to quaternary structure, part of the ribosomal stalk of the 50S ribosomal subunit. Interacts with L10 and the large rRNA to form the base of the stalk. L10 forms an elongated spine to which L12 dimers bind in a sequential fashion forming a multimeric L10(L12)X complex. In terms of processing, one or more lysine residues are methylated.

Its function is as follows. Forms part of the ribosomal stalk which helps the ribosome interact with GTP-bound translation factors. The protein is Large ribosomal subunit protein uL11 of Geobacter sulfurreducens (strain ATCC 51573 / DSM 12127 / PCA).